A 188-amino-acid chain; its full sequence is ATP synthase subunit b (188 aa).

The helical transmembrane segment at 19-39 (LPAVYDIVWSAVVFVVLLVVI) threads the bilayer.

Belongs to the ATPase B chain family. F-type ATPases have 2 components, F(1) - the catalytic core - and F(0) - the membrane proton channel. F(1) has five subunits: alpha(3), beta(3), gamma(1), delta(1), epsilon(1). F(0) has three main subunits: a(1), b(2) and c(10-14). The alpha and beta chains form an alternating ring which encloses part of the gamma chain. F(1) is attached to F(0) by a central stalk formed by the gamma and epsilon chains, while a peripheral stalk is formed by the delta and b chains.

Its subcellular location is the cell membrane. Its function is as follows. F(1)F(0) ATP synthase produces ATP from ADP in the presence of a proton or sodium gradient. F-type ATPases consist of two structural domains, F(1) containing the extramembraneous catalytic core and F(0) containing the membrane proton channel, linked together by a central stalk and a peripheral stalk. During catalysis, ATP synthesis in the catalytic domain of F(1) is coupled via a rotary mechanism of the central stalk subunits to proton translocation. Component of the F(0) channel, it forms part of the peripheral stalk, linking F(1) to F(0). This is ATP synthase subunit b from Clavibacter michiganensis subsp. michiganensis (strain NCPPB 382).